Reading from the N-terminus, the 637-residue chain is DNA primase (637 aa).

A CHC2-type zinc finger spans residues 39–63 (CPFHGEKTPSFNVNAEKGFYHCFGC). Residues 257–338 (HEVYLMEGFM…QIVKVPEGLD (82 aa)) form the Toprim domain. Glutamate 263, aspartate 307, and aspartate 309 together coordinate Mg(2+).

It belongs to the DnaG primase family. As to quaternary structure, monomer. Interacts with DnaB. It depends on Zn(2+) as a cofactor. The cofactor is Mg(2+).

The enzyme catalyses ssDNA + n NTP = ssDNA/pppN(pN)n-1 hybrid + (n-1) diphosphate.. Functionally, RNA polymerase that catalyzes the synthesis of short RNA molecules used as primers for DNA polymerase during DNA replication. The sequence is that of DNA primase from Lactococcus lactis subsp. lactis (strain IL1403) (Streptococcus lactis).